An 804-amino-acid polypeptide reads, in one-letter code: Probable copper-exporting P-type ATPase (804 aa).

The Cytoplasmic segment spans residues 1–101; that stretch reads MVKDTYISSA…VEHLSRMKRK (101 aa). Positions 16–82 constitute an HMA 1 domain; the sequence is MERTVRVTGM…VIEDLGYGVV (67 aa). The Cu(+) site is built by C27 and C30. A helical membrane pass occupies residues 102–122; it reads LYVAAFAGVLLLFLAHFISLP. Residues 123–128 are Extracellular-facing; it reads YEDFVQ. A helical transmembrane segment spans residues 129 to 149; it reads LLIALPAIFYSGSSIFKAAFS. At 150–159 the chain is on the cytoplasmic side; sequence ALRRRTLNMD. Residues 160–180 traverse the membrane as a helical segment; the sequence is VMYSMGVGAAFLASVLSTAGV. Residues 181-186 lie on the Extracellular side of the membrane; that stretch reads LPREYS. A helical transmembrane segment spans residues 187 to 204; the sequence is FYETSVLLLAFLLLGRTL. Residues 205-339 lie on the Cytoplasmic side of the membrane; the sequence is EARAKSRTGE…PIQRLADKVV (135 aa). Residues 340 to 360 form a helical membrane-spanning segment; sequence AYFIPTVLLVAISAFIYWYFI. At 361-364 the chain is on the extracellular side; the sequence is AHAP. A helical transmembrane segment spans residues 365–385; that stretch reads LLFAFTTLIAVLVVACPCAFG. The Cytoplasmic portion of the chain corresponds to 386-680; the sequence is LATPTALTVG…KIKQNIFWAL (295 aa). Catalysis depends on D424, which acts as the 4-aspartylphosphate intermediate. Residues 457–462 and 490–501 each bind ATP; these read ERRSEH and GEGVVADGILVG. D618 and D622 together coordinate Mg(2+). The helical transmembrane segment at 681–701 threads the bilayer; sequence IYNVILIPAAAGLLYPIFGVV. Over 702–704 the chain is Extracellular; that stretch reads FRP. Residues 705-725 form a helical membrane-spanning segment; that stretch reads EFAGLAMAMSSVSVVANSLLL. Residues 726 to 804 lie on the Cytoplasmic side of the membrane; sequence RNYVPPIRRG…AAGYQAKLRS (79 aa). Residues 740-801 form the HMA 2 domain; that stretch reads EKIVLELSGL…AVEAAGYQAK (62 aa). Residues C751 and C754 each coordinate Cu(+).

It belongs to the cation transport ATPase (P-type) (TC 3.A.3) family. Type IB subfamily. As to quaternary structure, interacts with CopZ probably in the CopZ Cu(+)-bound form.

It localises to the cell membrane. It carries out the reaction Cu(+)(in) + ATP + H2O = Cu(+)(out) + ADP + phosphate + H(+). Its activity is regulated as follows. Activated by Cu(+) and Ag(+) and inhibited by vanadate. Activated by CopZ in its Cu(+)-bound form. Functionally, probably involved in copper and silver export. In Archaeoglobus fulgidus (strain ATCC 49558 / DSM 4304 / JCM 9628 / NBRC 100126 / VC-16), this protein is Probable copper-exporting P-type ATPase (copA).